A 547-amino-acid chain; its full sequence is Chaperonin GroEL (547 aa).

ATP-binding positions include 30–33 (TLGP), K51, 87–91 (DGTTT), G415, 479–481 (NAA), and D495.

Belongs to the chaperonin (HSP60) family. Forms a cylinder of 14 subunits composed of two heptameric rings stacked back-to-back. Interacts with the co-chaperonin GroES.

It is found in the cytoplasm. It catalyses the reaction ATP + H2O + a folded polypeptide = ADP + phosphate + an unfolded polypeptide.. In terms of biological role, together with its co-chaperonin GroES, plays an essential role in assisting protein folding. The GroEL-GroES system forms a nano-cage that allows encapsulation of the non-native substrate proteins and provides a physical environment optimized to promote and accelerate protein folding. The sequence is that of Chaperonin GroEL from Pseudomonas paraeruginosa (strain DSM 24068 / PA7) (Pseudomonas aeruginosa (strain PA7)).